The following is a 273-amino-acid chain: Eukaryotic translation initiation factor 3 subunit J (273 aa).

The disordered stretch occupies residues 1–158 (MPTKKWEDEE…DPSDPSKTVE (158 aa)). Residues 34–54 (DEEANDSDVLDSWDAAEDSEV) are compositionally biased toward acidic residues. Positions 50–97 (EDSEVEREKAKKAAEAKAKAEAEAKANKKTKAARINEHKQRRKEAEES) form a coiled coil. The span at 55–75 (EREKAKKAAEAKAKAEAEAKA) shows a compositional bias: basic and acidic residues. Positions 95–104 (EESDESDDET) are enriched in acidic residues. Over residues 105 to 126 (ESQRRERLRRTEKEADLAHAED) the composition is skewed to basic and acidic residues.

Belongs to the eIF-3 subunit J family. Component of the eukaryotic translation initiation factor 3 (eIF-3) complex.

It is found in the cytoplasm. Its function is as follows. Component of the eukaryotic translation initiation factor 3 (eIF-3) complex, which is involved in protein synthesis of a specialized repertoire of mRNAs and, together with other initiation factors, stimulates binding of mRNA and methionyl-tRNAi to the 40S ribosome. The eIF-3 complex specifically targets and initiates translation of a subset of mRNAs involved in cell proliferation. This is Eukaryotic translation initiation factor 3 subunit J from Pyricularia oryzae (strain 70-15 / ATCC MYA-4617 / FGSC 8958) (Rice blast fungus).